A 398-amino-acid polypeptide reads, in one-letter code: Small ribosomal subunit protein uS3m (398 aa).

The protein belongs to the universal ribosomal protein uS3 family. Component of the mitochondrial small ribosomal subunit (mt-SSU). Mature yeast 74S mitochondrial ribosomes consist of a small (37S) and a large (54S) subunit. The 37S small subunit contains a 15S ribosomal RNA (15S mt-rRNA) and 34 different proteins. The 54S large subunit contains a 21S rRNA (21S mt-rRNA) and 46 different proteins. uS3m, uS4m and uS5m form the narrow entry site of the mRNA channel.

The protein localises to the mitochondrion. In terms of biological role, component of the mitochondrial ribosome (mitoribosome), a dedicated translation machinery responsible for the synthesis of mitochondrial genome-encoded proteins, including at least some of the essential transmembrane subunits of the mitochondrial respiratory chain. The mitoribosomes are attached to the mitochondrial inner membrane and translation products are cotranslationally integrated into the membrane. uS3m is essential for mitochondrial protein synthesis and required for the maturation of small ribosomal subunits. The chain is Small ribosomal subunit protein uS3m (VAR1) from Saccharomyces cerevisiae (strain ATCC 204508 / S288c) (Baker's yeast).